We begin with the raw amino-acid sequence, 549 residues long: Tight junction-associated protein 1 (549 aa).

A disordered region spans residues 1–34; that stretch reads MSSAAPAKKPYRKAPPEHRELRLEIPVSRLEQEE. A compositionally biased stretch (basic and acidic residues) spans 14–23; it reads APPEHRELRL. Positions 42–171 form a coiled coil; the sequence is MKLLQQENEE…EELNERYRLD (130 aa). Disordered stretches follow at residues 207 to 226 and 266 to 322; these read RSGQ…LSPG and VDMS…PLYP. Serine 295 bears the Phosphoserine mark. The segment covering 311–320 has biased composition (pro residues); it reads YPTPSPPHPL. Residue threonine 313 is modified to Phosphothreonine. Serine 315 and serine 340 each carry phosphoserine. Disordered stretches follow at residues 359–404, 410–429, and 434–549; these read EDGS…SEED, QRAF…RTAF, and LPEL…TVLS. The span at 369 to 383 shows a compositional bias: polar residues; sequence SVPSSPASAQGSPHH. The segment covering 389-400 has biased composition (low complexity); it reads PSALSAPASSAS. Threonine 417 carries the post-translational modification Phosphothreonine. Serine 483 is subject to Phosphoserine. A compositionally biased stretch (basic and acidic residues) spans 485-498; sequence EEERQSLLPDKEGT. Residues 522-534 show a composition bias toward basic residues; it reads RSPKRMGVHHLHR. Position 537 is a phosphoserine (serine 537). Residues 538–549 show a composition bias toward polar residues; the sequence is LTQAQEQGTVLS.

As to quaternary structure, interacts with DLG1. Interacts with ARF6 (GTP-bound form). As to expression, widely expressed including in adult thymus, heart, lung, liver, small intestine, kidney, spleen, testis and skeletal muscle and in embryonic brain but not detected in adult brain (at protein level).

The protein localises to the golgi apparatus. The protein resides in the trans-Golgi network. It is found in the cell junction. Its subcellular location is the tight junction. It localises to the cell membrane. Plays a role in regulating the structure of the Golgi apparatus. In Mus musculus (Mouse), this protein is Tight junction-associated protein 1.